The sequence spans 251 residues: Triosephosphate isomerase (251 aa).

Substrate is bound at residue 9 to 11 (NWK). The Electrophile role is filled by His-95. Glu-167 (proton acceptor) is an active-site residue. Residues Gly-173, Ser-213, and 234-235 (GG) contribute to the substrate site. Ser-213 bears the Phosphoserine mark.

It belongs to the triosephosphate isomerase family. Homodimer.

It is found in the cytoplasm. It carries out the reaction D-glyceraldehyde 3-phosphate = dihydroxyacetone phosphate. Its pathway is carbohydrate biosynthesis; gluconeogenesis. The protein operates within carbohydrate degradation; glycolysis; D-glyceraldehyde 3-phosphate from glycerone phosphate: step 1/1. Its function is as follows. Involved in the gluconeogenesis. Catalyzes stereospecifically the conversion of dihydroxyacetone phosphate (DHAP) to D-glyceraldehyde-3-phosphate (G3P). The sequence is that of Triosephosphate isomerase from Priestia megaterium (strain DSM 319 / IMG 1521) (Bacillus megaterium).